The primary structure comprises 208 residues: Small ribosomal subunit protein uS4 (208 aa).

The 64-residue stretch at 98 to 161 folds into the S4 RNA-binding domain; it reads RRLDNVIYRL…RKIPVLAEAQ (64 aa).

Belongs to the universal ribosomal protein uS4 family. As to quaternary structure, part of the 30S ribosomal subunit. Contacts protein S5. The interaction surface between S4 and S5 is involved in control of translational fidelity.

One of the primary rRNA binding proteins, it binds directly to 16S rRNA where it nucleates assembly of the body of the 30S subunit. In terms of biological role, with S5 and S12 plays an important role in translational accuracy. The protein is Small ribosomal subunit protein uS4 of Nitratidesulfovibrio vulgaris (strain ATCC 29579 / DSM 644 / CCUG 34227 / NCIMB 8303 / VKM B-1760 / Hildenborough) (Desulfovibrio vulgaris).